We begin with the raw amino-acid sequence, 159 residues long: Ribosomal RNA large subunit methyltransferase H (159 aa).

Residues Leu76, Gly108, and 127–132 (FGKMTL) contribute to the S-adenosyl-L-methionine site.

The protein belongs to the RNA methyltransferase RlmH family. In terms of assembly, homodimer.

It localises to the cytoplasm. The enzyme catalyses pseudouridine(1915) in 23S rRNA + S-adenosyl-L-methionine = N(3)-methylpseudouridine(1915) in 23S rRNA + S-adenosyl-L-homocysteine + H(+). Functionally, specifically methylates the pseudouridine at position 1915 (m3Psi1915) in 23S rRNA. This chain is Ribosomal RNA large subunit methyltransferase H, found in Lysinibacillus sphaericus (strain C3-41).